Here is a 383-residue protein sequence, read N- to C-terminus: ATP phosphoribosyltransferase regulatory subunit (383 aa).

This sequence belongs to the class-II aminoacyl-tRNA synthetase family. HisZ subfamily. As to quaternary structure, heteromultimer composed of HisG and HisZ subunits.

The protein localises to the cytoplasm. The protein operates within amino-acid biosynthesis; L-histidine biosynthesis; L-histidine from 5-phospho-alpha-D-ribose 1-diphosphate: step 1/9. Its function is as follows. Required for the first step of histidine biosynthesis. May allow the feedback regulation of ATP phosphoribosyltransferase activity by histidine. The sequence is that of ATP phosphoribosyltransferase regulatory subunit from Cupriavidus metallidurans (strain ATCC 43123 / DSM 2839 / NBRC 102507 / CH34) (Ralstonia metallidurans).